The following is an 865-amino-acid chain: Protein translocase subunit SecA (865 aa).

ATP-binding positions include Gln-93, 111-115 (GEGKT), and Asp-501. Residues Cys-841, Cys-843, Cys-852, and Cys-853 each coordinate Zn(2+).

Belongs to the SecA family. As to quaternary structure, monomer and homodimer. Part of the essential Sec protein translocation apparatus which comprises SecA, SecYEG and auxiliary proteins SecDF-YajC and YidC. The cofactor is Zn(2+).

Its subcellular location is the cell inner membrane. It localises to the cytoplasm. The enzyme catalyses ATP + H2O + cellular proteinSide 1 = ADP + phosphate + cellular proteinSide 2.. Part of the Sec protein translocase complex. Interacts with the SecYEG preprotein conducting channel. Has a central role in coupling the hydrolysis of ATP to the transfer of proteins into and across the cell membrane, serving as an ATP-driven molecular motor driving the stepwise translocation of polypeptide chains across the membrane. In Helicobacter pylori (strain J99 / ATCC 700824) (Campylobacter pylori J99), this protein is Protein translocase subunit SecA.